Consider the following 573-residue polypeptide: MLRLPTVLRQMRPVSRALAPHLTRAYAKDVKFGADARALMLQGVDLLADAVAVTMGPKGRTVIIEQSWGSPKVTKDGVTVAKAIDLKDKYKNIGAKLVQDVANNTNEEAGDGTTTATVLARSIAKEGFEKISKGANPVEIRRGVMLAVDAVIAELKKQSKPVTTPEEIAQVATISANGDKDIGNIISDAMKKVGRKGVITVKDGKTLNDELEIIEGMKFDRGYISPYFINTSKGQKCEFQDAYVLLSEKKISSVQSIVPALEIANAHRKPLVIIAEDVDGEALSTLVLNRLKVGLQVVAVKAPGFGDNRKNQLKDMAIATGGAVFGEEGLNLNLEDVQAHDLGKVGEVIVTKDDAMLLKGKGEKAQIEKRIQEITEQLEITTSEYEKEKLNERLAKLSDGVAVLKVGGTSDVEVNEKKDRVTDALNATRAAVEEGIVLGGGCALLRCIPALDSLKPSNEDQKIGIEIIKRALKIPAMTIAKNAGVEGSLIVEKILQSSSEIGYDAMLGDFVNMVEKGIIDPTKVVRTALLDAAGVASLLTTAEAVVTEIPKEEKDPGMGAMGGMGGGMGGGMF.

The N-terminal 26 residues, 1–26, are a transit peptide targeting the mitochondrion; the sequence is MLRLPTVLRQMRPVSRALAPHLTRAY. Lysine 31 carries the N6-succinyllysine modification. 2 positions are modified to phosphoserine: serine 67 and serine 70. Lysine 75 provides a ligand contact to ATP. Position 75 is an N6-acetyllysine (lysine 75). Lysine 82 carries the post-translational modification N6-acetyllysine; alternate. N6-succinyllysine; alternate is present on lysine 82. Residue lysine 87 is modified to N6-acetyllysine. Residue tyrosine 90 is modified to Phosphotyrosine. Lysine 91 carries the post-translational modification N6-acetyllysine. 111-115 contacts ATP; that stretch reads DGTTT. At lysine 125 the chain carries N6-acetyllysine; alternate. An N6-succinyllysine; alternate modification is found at lysine 125. Lysine 130 carries the N6-acetyllysine modification. N6-acetyllysine; alternate is present on lysine 133. An N6-succinyllysine; alternate modification is found at lysine 133. N6-malonyllysine; alternate is present on lysine 133. Lysine 156 is modified (N6-acetyllysine). Residues lysine 191, lysine 202, lysine 205, lysine 218, and lysine 236 each carry the N6-acetyllysine; alternate modification. Residues lysine 191, lysine 202, lysine 205, lysine 218, and lysine 236 each carry the N6-succinyllysine; alternate modification. Position 249 is an N6-acetyllysine (lysine 249). Lysine 250 carries the post-translational modification N6-acetyllysine; alternate. Lysine 250 is modified (N6-succinyllysine; alternate). Lysine 269 and lysine 292 each carry N6-acetyllysine. The residue at position 301 (lysine 301) is an N6-succinyllysine. The residue at position 314 (lysine 314) is an N6-acetyllysine. Lysine 352 is subject to N6-acetyllysine; alternate. The residue at position 352 (lysine 352) is an N6-succinyllysine; alternate. N6-acetyllysine is present on residues lysine 359 and lysine 389. Lysine 396 carries the N6-acetyllysine; alternate modification. N6-succinyllysine; alternate is present on lysine 396. Serine 410 carries the phosphoserine modification. Glycine 440 contacts ATP. Position 455 is an N6-acetyllysine; alternate (lysine 455). N6-succinyllysine; alternate is present on lysine 455. Lysine 469 carries the post-translational modification N6-acetyllysine. Lysine 481 bears the N6-acetyllysine; alternate mark. Lysine 481 bears the N6-succinyllysine; alternate mark. The residue at position 488 (serine 488) is a Phosphoserine. Aspartate 520 lines the ATP pocket. Lysine 551 participates in a covalent cross-link: Glycyl lysine isopeptide (Lys-Gly) (interchain with G-Cter in SUMO2).

Belongs to the chaperonin (HSP60) family. Homoheptamer arranged in a ring structure. The functional units of these chaperonins consist of heptameric rings of the large subunit Hsp60, which function as a back-to-back double ring. Interacts with 2 heptameric Hsp10 rings to form the symmetrical football complex. Interacts with HRAS. Interacts with ATAD3A. Interacts with ETFBKMT and EEF1AKMT3. Interacts with MFHAS1.

The protein localises to the mitochondrion matrix. It catalyses the reaction ATP + H2O + a folded polypeptide = ADP + phosphate + an unfolded polypeptide.. In terms of biological role, chaperonin implicated in mitochondrial protein import and macromolecular assembly. Together with Hsp10, facilitates the correct folding of imported proteins. May also prevent misfolding and promote the refolding and proper assembly of unfolded polypeptides generated under stress conditions in the mitochondrial matrix. The functional units of these chaperonins consist of heptameric rings of the large subunit Hsp60, which function as a back-to-back double ring. In a cyclic reaction, Hsp60 ring complexes bind one unfolded substrate protein per ring, followed by the binding of ATP and association with 2 heptameric rings of the co-chaperonin Hsp10. This leads to sequestration of the substrate protein in the inner cavity of Hsp60 where, for a certain period of time, it can fold undisturbed by other cell components. Synchronous hydrolysis of ATP in all Hsp60 subunits results in the dissociation of the chaperonin rings and the release of ADP and the folded substrate protein. The protein is 60 kDa heat shock protein, mitochondrial (HSPD1) of Cricetulus griseus (Chinese hamster).